Here is a 183-residue protein sequence, read N- to C-terminus: MRLLSFVVLALFAVTQAEEGARLLASKSLLNRYAVEGRDLTLQYNIYNVGSSAALDVELSDDSFPPEDFGIVSGMLNVKWDRIAPASNVSHTVVLRPLKAGYFNFTSATITYLAQEDGPVVIGSTSAPGQGGILAQREFDRRFSPHFLDWAAFGVMTLPSIGIPLLLWYSSKRKYDTPKTKKN.

An N-terminal signal peptide occupies residues 1–17 (MRLLSFVVLALFAVTQA). At 18–149 (EEGARLLASK…DRRFSPHFLD (132 aa)) the chain is on the lumenal side. Residues asparagine 88 and asparagine 104 are each glycosylated (N-linked (GlcNAc...) asparagine). Residues 150–169 (WAAFGVMTLPSIGIPLLLWY) form a helical membrane-spanning segment. The Cytoplasmic portion of the chain corresponds to 170 to 183 (SSKRKYDTPKTKKN).

This sequence belongs to the TRAP-beta family. In terms of assembly, heterotetramer of TRAP-alpha, TRAP-beta, TRAP-delta and TRAP-gamma. Interacts with STING1.

It localises to the endoplasmic reticulum membrane. Its function is as follows. TRAP proteins are part of a complex whose function is to bind calcium to the ER membrane and thereby regulate the retention of ER resident proteins. The sequence is that of Translocon-associated protein subunit beta (SSR2) from Homo sapiens (Human).